The chain runs to 270 residues: ATP synthase subunit a (270 aa).

5 helical membrane-spanning segments follow: residues 37–57, 98–118, 143–163, 217–237, and 239–259; these read NVHI…LWVF, VAPL…MDLI, DVNI…YYSI, VVFI…GALP, and AIFH…LTIV.

The protein belongs to the ATPase A chain family. As to quaternary structure, F-type ATPases have 2 components, CF(1) - the catalytic core - and CF(0) - the membrane proton channel. CF(1) has five subunits: alpha(3), beta(3), gamma(1), delta(1), epsilon(1). CF(0) has three main subunits: a(1), b(2) and c(9-12). The alpha and beta chains form an alternating ring which encloses part of the gamma chain. CF(1) is attached to CF(0) by a central stalk formed by the gamma and epsilon chains, while a peripheral stalk is formed by the delta and b chains.

The protein resides in the cell inner membrane. Key component of the proton channel; it plays a direct role in the translocation of protons across the membrane. The protein is ATP synthase subunit a of Aliivibrio salmonicida (strain LFI1238) (Vibrio salmonicida (strain LFI1238)).